The chain runs to 89 residues: Small ribosomal subunit protein uS15 (89 aa).

The protein belongs to the universal ribosomal protein uS15 family. Part of the 30S ribosomal subunit. Forms a bridge to the 50S subunit in the 70S ribosome, contacting the 23S rRNA.

One of the primary rRNA binding proteins, it binds directly to 16S rRNA where it helps nucleate assembly of the platform of the 30S subunit by binding and bridging several RNA helices of the 16S rRNA. In terms of biological role, forms an intersubunit bridge (bridge B4) with the 23S rRNA of the 50S subunit in the ribosome. This is Small ribosomal subunit protein uS15 from Neisseria gonorrhoeae (strain ATCC 700825 / FA 1090).